The primary structure comprises 254 residues: Type III pantothenate kinase (254 aa).

Position 6 to 13 (6 to 13 (DVGNTNTV)) interacts with ATP. Residues Tyr100 and 107 to 110 (GADR) contribute to the substrate site. Asp109 acts as the Proton acceptor in catalysis. Asp129 contributes to the K(+) binding site. Position 132 (Thr132) interacts with ATP. Position 184 (Thr184) interacts with substrate.

It belongs to the type III pantothenate kinase family. Homodimer. NH4(+) is required as a cofactor. K(+) serves as cofactor.

The protein localises to the cytoplasm. The catalysed reaction is (R)-pantothenate + ATP = (R)-4'-phosphopantothenate + ADP + H(+). The protein operates within cofactor biosynthesis; coenzyme A biosynthesis; CoA from (R)-pantothenate: step 1/5. Its function is as follows. Catalyzes the phosphorylation of pantothenate (Pan), the first step in CoA biosynthesis. This Syntrophus aciditrophicus (strain SB) protein is Type III pantothenate kinase.